The chain runs to 334 residues: Rhomboid-like protein 14, mitochondrial (334 aa).

Residues Met-1–Val-87 constitute a mitochondrion transit peptide. The next 4 helical transmembrane spans lie at Glu-114–Ala-134, Ala-146–Leu-166, Val-176–Met-196, and Phe-197–Leu-217. Catalysis depends on Ser-156, which acts as the Nucleophile. The active-site Charge relay system is the His-206. A RanBP2-type zinc finger spans residues Gly-273 to Arg-302.

Belongs to the peptidase S54 family.

The protein resides in the mitochondrion membrane. Functionally, probable rhomboid-type serine protease that catalyzes intramembrane proteolysis. May function in the heat-shock response pathway. The polypeptide is Rhomboid-like protein 14, mitochondrial (Arabidopsis thaliana (Mouse-ear cress)).